The chain runs to 201 residues: Glycerol-3-phosphate acyltransferase (201 aa).

Transmembrane regions (helical) follow at residues 3 to 23 (LFAIFYLFLAYLLGSVSSAIL), 53 to 73 (WVALSVLLFDMLKGMLPVWLG), 80 to 100 (HFELGMVALGACLGHIFPIFF), 115 to 135 (IAPISWGVAGSMLGTWLLIFF), and 153 to 175 (FYVWWFKPEFTFPVALVCCLLIY).

The protein belongs to the PlsY family. Probably interacts with PlsX.

It is found in the cell inner membrane. The enzyme catalyses an acyl phosphate + sn-glycerol 3-phosphate = a 1-acyl-sn-glycero-3-phosphate + phosphate. Its pathway is lipid metabolism; phospholipid metabolism. Catalyzes the transfer of an acyl group from acyl-phosphate (acyl-PO(4)) to glycerol-3-phosphate (G3P) to form lysophosphatidic acid (LPA). This enzyme utilizes acyl-phosphate as fatty acyl donor, but not acyl-CoA or acyl-ACP. The chain is Glycerol-3-phosphate acyltransferase from Pasteurella multocida (strain Pm70).